A 715-amino-acid polypeptide reads, in one-letter code: Fatty acid oxidation complex subunit alpha (715 aa).

An enoyl-CoA hydratase region spans residues 1–190; that stretch reads MTTTSAFMLN…KAGLVDDVVP (190 aa). A 3-hydroxyacyl-CoA dehydrogenase region spans residues 306 to 714; it reads GPLNSVGILG…FWTNGETDQG (409 aa).

This sequence in the N-terminal section; belongs to the enoyl-CoA hydratase/isomerase family. It in the central section; belongs to the 3-hydroxyacyl-CoA dehydrogenase family. Heterotetramer of two alpha chains (FadJ) and two beta chains (FadI).

The protein localises to the cytoplasm. The catalysed reaction is a (3S)-3-hydroxyacyl-CoA = a (2E)-enoyl-CoA + H2O. It carries out the reaction a 4-saturated-(3S)-3-hydroxyacyl-CoA = a (3E)-enoyl-CoA + H2O. It catalyses the reaction a (3S)-3-hydroxyacyl-CoA + NAD(+) = a 3-oxoacyl-CoA + NADH + H(+). The enzyme catalyses (3S)-3-hydroxybutanoyl-CoA = (3R)-3-hydroxybutanoyl-CoA. Its pathway is lipid metabolism; fatty acid beta-oxidation. Functionally, catalyzes the formation of a hydroxyacyl-CoA by addition of water on enoyl-CoA. Also exhibits 3-hydroxyacyl-CoA epimerase and 3-hydroxyacyl-CoA dehydrogenase activities. This chain is Fatty acid oxidation complex subunit alpha, found in Salmonella paratyphi A (strain ATCC 9150 / SARB42).